A 325-amino-acid polypeptide reads, in one-letter code: Urease accessory protein UreD (325 aa).

The protein belongs to the UreD family. As to quaternary structure, ureD, UreF and UreG form a complex that acts as a GTP-hydrolysis-dependent molecular chaperone, activating the urease apoprotein by helping to assemble the nickel containing metallocenter of UreC. The UreE protein probably delivers the nickel.

Its subcellular location is the cytoplasm. Its function is as follows. Required for maturation of urease via the functional incorporation of the urease nickel metallocenter. In terms of biological role, expression of the urease operon increases the likelihood of bacterial survival by contributing to acid resistance in vitro and in vivo in BALB/c mice. Y.enterocolitica enters the body via an oral path and must survive the acidic stomach before being able to colonize the intestinal mucosa. The polypeptide is Urease accessory protein UreD (Yersinia enterocolitica).